Here is a 156-residue protein sequence, read N- to C-terminus: Glutamine--fructose-6-phosphate aminotransferase [isomerizing] (156 aa).

An SIS domain is found at 4-146; the sequence is MAHHIVPARD…VLKGTDVDQP (143 aa). Residue Lys151 is the For Fru-6P isomerization activity of the active site.

In terms of assembly, homodimer.

It is found in the cytoplasm. The catalysed reaction is D-fructose 6-phosphate + L-glutamine = D-glucosamine 6-phosphate + L-glutamate. In terms of biological role, catalyzes the first step in hexosamine metabolism, converting fructose-6P into glucosamine-6P using glutamine as a nitrogen source. In Sphingobium yanoikuyae (Sphingomonas yanoikuyae), this protein is Glutamine--fructose-6-phosphate aminotransferase [isomerizing] (glmS).